The chain runs to 116 residues: UPF0102 protein IL0423 (116 aa).

Belongs to the UPF0102 family.

The sequence is that of UPF0102 protein IL0423 from Idiomarina loihiensis (strain ATCC BAA-735 / DSM 15497 / L2-TR).